We begin with the raw amino-acid sequence, 291 residues long: 4-hydroxy-tetrahydrodipicolinate synthase (291 aa).

Residue threonine 45 coordinates pyruvate. Tyrosine 133 (proton donor/acceptor) is an active-site residue. Catalysis depends on lysine 161, which acts as the Schiff-base intermediate with substrate. Isoleucine 203 contributes to the pyruvate binding site.

Belongs to the DapA family. In terms of assembly, homotetramer; dimer of dimers.

Its subcellular location is the cytoplasm. It carries out the reaction L-aspartate 4-semialdehyde + pyruvate = (2S,4S)-4-hydroxy-2,3,4,5-tetrahydrodipicolinate + H2O + H(+). It participates in amino-acid biosynthesis; L-lysine biosynthesis via DAP pathway; (S)-tetrahydrodipicolinate from L-aspartate: step 3/4. Catalyzes the condensation of (S)-aspartate-beta-semialdehyde [(S)-ASA] and pyruvate to 4-hydroxy-tetrahydrodipicolinate (HTPA). The sequence is that of 4-hydroxy-tetrahydrodipicolinate synthase from Neisseria gonorrhoeae (strain ATCC 700825 / FA 1090).